Here is a 370-residue protein sequence, read N- to C-terminus: Lipoyl synthase 1, chloroplastic (370 aa).

2 disordered regions span residues 1–25 (MMQS…PVCR) and 39–67 (EAAP…KKPA). A chloroplast-targeting transit peptide spans 1–37 (MMQSSLARPLPRPPIRPACGNPVCRSRPGSVSVARCR). [4Fe-4S] cluster is bound by residues cysteine 95, cysteine 100, cysteine 106, cysteine 132, cysteine 136, cysteine 139, and serine 347. The Radical SAM core domain maps to 115 to 336 (GEGDGIATAT…KEYGESVGFR (222 aa)).

The protein belongs to the radical SAM superfamily. Lipoyl synthase family. The cofactor is [4Fe-4S] cluster.

It localises to the plastid. It is found in the chloroplast. It carries out the reaction [[Fe-S] cluster scaffold protein carrying a second [4Fe-4S](2+) cluster] + N(6)-octanoyl-L-lysyl-[protein] + 2 oxidized [2Fe-2S]-[ferredoxin] + 2 S-adenosyl-L-methionine + 4 H(+) = [[Fe-S] cluster scaffold protein] + N(6)-[(R)-dihydrolipoyl]-L-lysyl-[protein] + 4 Fe(3+) + 2 hydrogen sulfide + 2 5'-deoxyadenosine + 2 L-methionine + 2 reduced [2Fe-2S]-[ferredoxin]. It participates in protein modification; protein lipoylation via endogenous pathway; protein N(6)-(lipoyl)lysine from octanoyl-[acyl-carrier-protein]: step 2/2. Its function is as follows. Catalyzes the radical-mediated insertion of two sulfur atoms into the C-6 and C-8 positions of the octanoyl moiety bound to the lipoyl domains of lipoate-dependent enzymes, thereby converting the octanoylated domains into lipoylated derivatives. The chain is Lipoyl synthase 1, chloroplastic from Oryza sativa subsp. indica (Rice).